Consider the following 308-residue polypeptide: Ribosomal RNA small subunit methyltransferase H (308 aa).

S-adenosyl-L-methionine-binding positions include 46–48 (AGH), Asp-63, Tyr-87, Asp-108, and Gln-115. Positions 269 to 308 (TKRPVEASEEERGRNPRARSAKLRAAEKVAAPEGLPEVEV) are disordered. Positions 271–282 (RPVEASEEERGR) are enriched in basic and acidic residues.

The protein belongs to the methyltransferase superfamily. RsmH family.

It is found in the cytoplasm. The enzyme catalyses cytidine(1402) in 16S rRNA + S-adenosyl-L-methionine = N(4)-methylcytidine(1402) in 16S rRNA + S-adenosyl-L-homocysteine + H(+). In terms of biological role, specifically methylates the N4 position of cytidine in position 1402 (C1402) of 16S rRNA. This chain is Ribosomal RNA small subunit methyltransferase H, found in Deinococcus geothermalis (strain DSM 11300 / CIP 105573 / AG-3a).